Reading from the N-terminus, the 257-residue chain is Type III pantothenate kinase (257 aa).

6–13 (DCGNTNTV) contacts ATP. 107 to 110 (GPDR) is a substrate binding site. Residue aspartate 109 is the Proton acceptor of the active site. K(+) is bound at residue aspartate 129. An ATP-binding site is contributed by threonine 132. Residue threonine 184 participates in substrate binding.

Belongs to the type III pantothenate kinase family. As to quaternary structure, homodimer. It depends on NH4(+) as a cofactor. The cofactor is K(+).

It localises to the cytoplasm. The enzyme catalyses (R)-pantothenate + ATP = (R)-4'-phosphopantothenate + ADP + H(+). It participates in cofactor biosynthesis; coenzyme A biosynthesis; CoA from (R)-pantothenate: step 1/5. Functionally, catalyzes the phosphorylation of pantothenate (Pan), the first step in CoA biosynthesis. The chain is Type III pantothenate kinase from Cereibacter sphaeroides (strain ATCC 17025 / ATH 2.4.3) (Rhodobacter sphaeroides).